Reading from the N-terminus, the 68-residue chain is KDGYLVNKSTGCKYSCIENINDSHCNEECISSIRKGSYGYCYKFYCYCIGMPDSTQVYPIPGKTCSTE.

Residues 1-66 form the LCN-type CS-alpha/beta domain; that stretch reads KDGYLVNKST…VYPIPGKTCS (66 aa). Cystine bridges form between Cys12–Cys65, Cys16–Cys41, Cys25–Cys46, and Cys29–Cys48.

The protein belongs to the long (4 C-C) scorpion toxin superfamily. Sodium channel inhibitor family. In terms of tissue distribution, expressed by the venom gland.

It localises to the secreted. Functionally, binds to sodium channels (Nav) and inhibits them. In Centruroides gracilis (Slenderbrown scorpion), this protein is Toxin Cg2.